The sequence spans 111 residues: Small ribosomal subunit protein bS16 (111 aa).

It belongs to the bacterial ribosomal protein bS16 family.

The polypeptide is Small ribosomal subunit protein bS16 (Rickettsia africae (strain ESF-5)).